Consider the following 226-residue polypeptide: UPF0502 protein Daci_5373 (226 aa).

Belongs to the UPF0502 family.

The sequence is that of UPF0502 protein Daci_5373 from Delftia acidovorans (strain DSM 14801 / SPH-1).